The chain runs to 140 residues: MASVGNQTVHTGNTVYLMIGNKIIGRAQSASGERQYGTQGIYEIGSIMPQEHVYLKYEGTITLERMRMKKEDLASLGITALGEDILQRDIIDIVMMDNLTKEIVVAYRGCSAISYSESFTANEVTSESTQFTYLTSAKVK.

The protein localises to the virion. This chain is Virion protein 5, found in Enterococcus faecalis (Streptococcus faecalis).